Consider the following 70-residue polypeptide: uncharacterized protein (70 aa).

Residues 12-32 (VLFMNFFSVFVCTIGTLFLVF) traverse the membrane as a helical segment.

Its subcellular location is the membrane. This is an uncharacterized protein from Saccharomyces cerevisiae (strain ATCC 204508 / S288c) (Baker's yeast).